Here is a 559-residue protein sequence, read N- to C-terminus: CTP synthase (559 aa).

The segment at 1-270 (MTKFVFVTGG…DGLICDKLRI (270 aa)) is amidoligase domain. Ser-13 provides a ligand contact to CTP. A UTP-binding site is contributed by Ser-13. Residues 14-19 (SLGKGI) and Asp-71 each bind ATP. Positions 71 and 144 each coordinate Mg(2+). Residues 151-153 (DIE), 191-196 (KTKPTQ), and Lys-227 contribute to the CTP site. UTP is bound by residues 191–196 (KTKPTQ) and Lys-227. Residues 295-547 (SIAMVGKYVD…IKAALDHKAR (253 aa)) form the Glutamine amidotransferase type-1 domain. Gly-356 contacts L-glutamine. Cys-383 serves as the catalytic Nucleophile; for glutamine hydrolysis. L-glutamine contacts are provided by residues 384 to 387 (LGMQ), Glu-407, and Arg-473. Catalysis depends on residues His-520 and Glu-522.

The protein belongs to the CTP synthase family. Homotetramer.

The enzyme catalyses UTP + L-glutamine + ATP + H2O = CTP + L-glutamate + ADP + phosphate + 2 H(+). The catalysed reaction is L-glutamine + H2O = L-glutamate + NH4(+). It carries out the reaction UTP + NH4(+) + ATP = CTP + ADP + phosphate + 2 H(+). The protein operates within pyrimidine metabolism; CTP biosynthesis via de novo pathway; CTP from UDP: step 2/2. With respect to regulation, allosterically activated by GTP, when glutamine is the substrate; GTP has no effect on the reaction when ammonia is the substrate. The allosteric effector GTP functions by stabilizing the protein conformation that binds the tetrahedral intermediate(s) formed during glutamine hydrolysis. Inhibited by the product CTP, via allosteric rather than competitive inhibition. Its function is as follows. Catalyzes the ATP-dependent amination of UTP to CTP with either L-glutamine or ammonia as the source of nitrogen. Regulates intracellular CTP levels through interactions with the four ribonucleotide triphosphates. The polypeptide is CTP synthase (Variovorax paradoxus (strain S110)).